A 720-amino-acid chain; its full sequence is DNA helicase II (720 aa).

A UvrD-like helicase ATP-binding domain is found at 8–286; it reads DSLNDKQREA…IRLEQNYRST (279 aa). Residues 32–37 and arginine 284 contribute to the ATP site; that span reads GSGKTR. The UvrD-like helicase C-terminal domain occupies 287–564; sequence SNILSAANAL…QLMTLHSAKG (278 aa).

It belongs to the helicase family. UvrD subfamily.

It carries out the reaction Couples ATP hydrolysis with the unwinding of duplex DNA by translocating in the 3'-5' direction.. It catalyses the reaction ATP + H2O = ADP + phosphate + H(+). Its function is as follows. A helicase with DNA-dependent ATPase activity. Unwinds DNA duplexes with 3'-5' polarity. Translocates on single-stranded DNA with 3'-5' polarity. Initiates unwinding more efficiently from a nicked substrate than double-stranded DNA. Involved in the post-incision events of nucleotide excision repair and methyl-directed mismatch repair, and probably also in repair of alkylated DNA. The protein is DNA helicase II of Escherichia coli (strain K12).